Consider the following 70-residue polypeptide: Ribosome modulation factor (70 aa).

Belongs to the ribosome modulation factor family.

It is found in the cytoplasm. Functionally, during stationary phase, converts 70S ribosomes to an inactive dimeric form (100S ribosomes). The chain is Ribosome modulation factor from Marinobacter adhaerens (strain DSM 23420 / HP15).